We begin with the raw amino-acid sequence, 144 residues long: Large ribosomal subunit protein uL11 (144 aa).

Belongs to the universal ribosomal protein uL11 family. In terms of assembly, part of the ribosomal stalk of the 50S ribosomal subunit. Interacts with L10 and the large rRNA to form the base of the stalk. L10 forms an elongated spine to which L12 dimers bind in a sequential fashion forming a multimeric L10(L12)X complex. In terms of processing, one or more lysine residues are methylated.

In terms of biological role, forms part of the ribosomal stalk which helps the ribosome interact with GTP-bound translation factors. In Polaromonas naphthalenivorans (strain CJ2), this protein is Large ribosomal subunit protein uL11.